The sequence spans 220 residues: LHFPL tetraspan subfamily member 1 protein (220 aa).

Residues 1–20 (MRSSLTMVGTLWAFLSLVTA) form the signal peptide. Helical transmembrane passes span 86–106 (VVTG…VLGC) and 122–142 (AAQF…PLGW). N-linked (GlcNAc...) asparagine glycosylation is present at Asn-153. The chain crosses the membrane as a helical span at residues 165 to 185 (LGWAYYCAGGGAAAAMLICTW).

The protein belongs to the LHFP family. In terms of tissue distribution, widely expressed. Expressed at high levels in lung, thymus, skeletal muscle, colon and ovary.

The protein localises to the membrane. The sequence is that of LHFPL tetraspan subfamily member 1 protein from Homo sapiens (Human).